The sequence spans 647 residues: Zinc finger protein 567 (647 aa).

One can recognise a KRAB domain in the interval 32-77 (MDVMLENYCHLISVGCHMTKPDVILKLERGEEPWTSFKGHTCLEEN). Glycyl lysine isopeptide (Lys-Gly) (interchain with G-Cter in SUMO2) cross-links involve residues K173, K202, and K217. A C2H2-type 1; degenerate zinc finger spans residues 210-232 (FEYNDCEKAFLKRGGPVTHSRTY). 7 consecutive C2H2-type zinc fingers follow at residues 253-275 (HTCT…QGIH), 281-303 (YQCH…QRTH), 309-331 (FVCN…QRTH), 337-359 (YECP…QRTH), 365-387 (YECS…QRIH), 393-415 (YICK…QRTH), and 421-443 (YICN…EKTH). K447 is covalently cross-linked (Glycyl lysine isopeptide (Lys-Gly) (interchain with G-Cter in SUMO2)). C2H2-type zinc fingers lie at residues 449–471 (YICN…QRTH), 477–499 (YECP…HRTH), 505–527 (YECN…QRIH), 533–555 (YICN…QKIH), 561–583 (YECP…QRTH), 589–611 (YKCS…QRTH), and 617–639 (YICN…QRTH).

Belongs to the krueppel C2H2-type zinc-finger protein family.

It is found in the nucleus. In terms of biological role, may be involved in transcriptional regulation. The sequence is that of Zinc finger protein 567 (ZNF567) from Bos taurus (Bovine).